The chain runs to 321 residues: Replication factor C small subunit (321 aa).

46–53 is a binding site for ATP; it reads GPAGVGKT.

The protein belongs to the activator 1 small subunits family. RfcS subfamily. As to quaternary structure, heterohexamer composed of four small subunits (RfcS) and two large subunits (RfcL).

Its function is as follows. Part of the RFC clamp loader complex which loads the PCNA sliding clamp onto DNA. The complex possesses DNA-dependent ATPase activity which is further stimulated by PCNA. In conjunction with PCNA stimulates DNA synthesis by PolB, relieving inhibition by replication protein A (RPA). In Methanothermobacter thermautotrophicus (strain ATCC 29096 / DSM 1053 / JCM 10044 / NBRC 100330 / Delta H) (Methanobacterium thermoautotrophicum), this protein is Replication factor C small subunit (rfcS).